Here is a 241-residue protein sequence, read N- to C-terminus: Uridylate kinase (241 aa).

Position 15–18 (15–18 (KMSG)) interacts with ATP. Gly-57 is a binding site for UMP. ATP is bound by residues Gly-58 and Arg-62. UMP is bound by residues Asp-77 and 138-145 (TGNPFFTT). ATP contacts are provided by Thr-165, Tyr-171, and Asp-174.

The protein belongs to the UMP kinase family. Homohexamer.

The protein localises to the cytoplasm. It catalyses the reaction UMP + ATP = UDP + ADP. It participates in pyrimidine metabolism; CTP biosynthesis via de novo pathway; UDP from UMP (UMPK route): step 1/1. With respect to regulation, inhibited by UTP. Its function is as follows. Catalyzes the reversible phosphorylation of UMP to UDP. This Dichelobacter nodosus (strain VCS1703A) protein is Uridylate kinase.